A 494-amino-acid chain; its full sequence is Glutamyl-tRNA(Gln) amidotransferase subunit A (494 aa).

Catalysis depends on charge relay system residues Lys-81 and Ser-156. Ser-180 functions as the Acyl-ester intermediate in the catalytic mechanism.

The protein belongs to the amidase family. GatA subfamily. As to quaternary structure, heterotrimer of A, B and C subunits.

The catalysed reaction is L-glutamyl-tRNA(Gln) + L-glutamine + ATP + H2O = L-glutaminyl-tRNA(Gln) + L-glutamate + ADP + phosphate + H(+). Its function is as follows. Allows the formation of correctly charged Gln-tRNA(Gln) through the transamidation of misacylated Glu-tRNA(Gln) in organisms which lack glutaminyl-tRNA synthetase. The reaction takes place in the presence of glutamine and ATP through an activated gamma-phospho-Glu-tRNA(Gln). The chain is Glutamyl-tRNA(Gln) amidotransferase subunit A from Mycobacterium bovis (strain ATCC BAA-935 / AF2122/97).